Here is a 73-residue protein sequence, read N- to C-terminus: Large ribosomal subunit protein bL31 (73 aa).

Belongs to the bacterial ribosomal protein bL31 family. Type A subfamily. Part of the 50S ribosomal subunit.

Its function is as follows. Binds the 23S rRNA. This Rhizobium etli (strain CIAT 652) protein is Large ribosomal subunit protein bL31.